The chain runs to 127 residues: Protein KRTCAP2 homolog (127 aa).

A run of 4 helical transmembrane segments spans residues 13–33 (LISL…SNFF), 41–61 (ILGG…IGAI), 65–85 (VKLL…SSVH), and 87–107 (VSGT…NHAS).

Belongs to the KRTCAP2 family. As to quaternary structure, component of the oligosaccharyltransferase (OST) complex.

It localises to the membrane. Functionally, subunit of the oligosaccharyl transferase (OST) complex that catalyzes the initial transfer of a defined glycan (Glc(3)Man(9)GlcNAc(2) in eukaryotes) from the lipid carrier dolichol-pyrophosphate to an asparagine residue within an Asn-X-Ser/Thr consensus motif in nascent polypeptide chains, the first step in protein N-glycosylation. N-glycosylation occurs cotranslationally and the complex associates with the Sec61 complex at the channel-forming translocon complex that mediates protein translocation across the endoplasmic reticulum (ER). All subunits are required for a maximal enzyme activity. The chain is Protein KRTCAP2 homolog from Dictyostelium discoideum (Social amoeba).